Here is a 161-residue protein sequence, read N- to C-terminus: Nucleotide-binding protein Bphyt_3208 (161 aa).

This sequence belongs to the YajQ family.

Its function is as follows. Nucleotide-binding protein. The protein is Nucleotide-binding protein Bphyt_3208 of Paraburkholderia phytofirmans (strain DSM 17436 / LMG 22146 / PsJN) (Burkholderia phytofirmans).